We begin with the raw amino-acid sequence, 207 residues long: MGGKWSKSSIVGWPQIRERIRQTPVAAEGVGAVSQDLARHGAITSSNTATNNPDCAWLEAQEEDSDVGFPVRPQVPLRPMTYKAAFDLSFFLKEKGGLDGLIYSKRRQDILDLWVYNTQGFFPDWQNYTPGPGTRLPLTFGWCFKLVPMDPAEIEEANKGENISLLHPICQHGMEDEDREVLVWRFNSSLARRHLARELHPEYYKDC.

Gly-2 carries the N-myristoyl glycine; by host lipid modification. Residue Ser-6 is modified to Phosphoserine; by host. The tract at residues 62–66 (EEDSD) is acidic; interacts with host PACS1 and PACS2; stabilizes the interaction of NEF/MHC-I with host AP1M1; necessary for MHC-I internalization. An SH3-binding; interaction with Src family tyrosine kinases region spans residues 70 to 79 (PVRPQVPLRP). The short motif at 73 to 76 (PQVP) is the PxxP; stabilizes the interaction of NEF/MHC-I with host AP1M1; necessary for MHC-I internalization element. Residues 109 to 125 (DILDLWVYNTQGFFPDW) form a mediates dimerization, Nef-PTE1 interaction region. Residues 149–181 (MDPAEIEEANKGENISLLHPICQHGMEDEDREV) are binding to ATP6V1H. Residues 165–166 (LL) carry the Dileucine internalization motif; necessary for CD4 internalization motif. The Diacidic; necessary for CD4 internalization motif lies at 175–176 (ED).

The protein belongs to the lentivirus primate group Nef protein family. In terms of assembly, monomer; cytosolic form. Homodimer; membrane bound form. Interacts with Nef associated p21-activated kinase (PAK2); this interaction activates PAK2. Associates with the Nef-MHC-I-AP1 complex; this complex is required for MHC-I internalization. Interacts (via C-terminus) with host PI3-kinase. Interacts with host PACS1; this interaction seems to be weak. Interacts with host PACS2. Interacts with host LCK and MAPK3; these interactions inhibit the kinase activity of the latter. Interacts with host ATP6V1H; this interaction may play a role in CD4 endocytosis. Associates with the CD4-Nef-AP2 complex; this complex is required for CD4 internalization. Interacts with host AP2 subunit alpha and AP2 subunit sigma2. Interacts with TCR-zeta chain; this interaction up-regulates the Fas ligand (FasL) surface expression. Interacts with host HCK, LYN, and SRC; these interactions activate the Src family kinases. Interacts with MAP3K5; this interaction inhibits the Fas and TNFR-mediated death signals. Interacts with beta-COP and PTE1. Interacts with human RACK1; this increases Nef phosphorylation by PKC. Interacts with TP53; this interaction decreases the half-life of TP53, protecting the infected cell against p53-mediated apoptosis. The virion-associated Nef proteins are cleaved by the viral protease to release the soluble C-terminal core protein. Nef is probably cleaved concomitantly with viral structural proteins on maturation of virus particles. Post-translationally, myristoylated. In terms of processing, phosphorylated on serine residues, probably by host PKCdelta and theta.

It is found in the host cell membrane. The protein localises to the virion. It localises to the secreted. Its subcellular location is the host Golgi apparatus membrane. Functionally, factor of infectivity and pathogenicity, required for optimal virus replication. Alters numerous pathways of T-lymphocyte function and down-regulates immunity surface molecules in order to evade host defense and increase viral infectivity. Alters the functionality of other immunity cells, like dendritic cells, monocytes/macrophages and NK cells. Its function is as follows. In infected CD4(+) T-lymphocytes, down-regulates the surface MHC-I, mature MHC-II, CD4, CD28, CCR5 and CXCR4 molecules. Mediates internalization and degradation of host CD4 through the interaction of with the cytoplasmic tail of CD4, the recruitment of AP-2 (clathrin adapter protein complex 2), internalization through clathrin coated pits, and subsequent transport to endosomes and lysosomes for degradation. Diverts host MHC-I molecules to the trans-Golgi network-associated endosomal compartments by an endocytic pathway to finally target them for degradation. MHC-I down-regulation may involve AP-1 (clathrin adapter protein complex 1) or possibly Src family kinase-ZAP70/Syk-PI3K cascade recruited by PACS2. In consequence infected cells are masked for immune recognition by cytotoxic T-lymphocytes. Decreasing the number of immune receptors also prevents reinfection by more HIV particles (superinfection). Down-regulates host SERINC3 and SERINC5 thereby excluding these proteins from the viral particles. Virion infectivity is drastically higher when SERINC3 or SERINC5 are excluded from the viral envelope, because these host antiviral proteins impair the membrane fusion event necessary for subsequent virion penetration. In terms of biological role, bypasses host T-cell signaling by inducing a transcriptional program nearly identical to that of anti-CD3 cell activation. Interaction with TCR-zeta chain up-regulates the Fas ligand (FasL). Increasing surface FasL molecules and decreasing surface MHC-I molecules on infected CD4(+) cells send attacking cytotoxic CD8+ T-lymphocytes into apoptosis. Plays a role in optimizing the host cell environment for viral replication without causing cell death by apoptosis. Protects the infected cells from apoptosis in order to keep them alive until the next virus generation is ready to strike. Inhibits the Fas and TNFR-mediated death signals by blocking MAP3K5/ASK1. Decreases the half-life of TP53, protecting the infected cell against p53-mediated apoptosis. Inhibits the apoptotic signals regulated by the Bcl-2 family proteins through the formation of a Nef/PI3-kinase/PAK2 complex that leads to activation of PAK2 and induces phosphorylation of host BAD. Functionally, extracellular Nef protein targets CD4(+) T-lymphocytes for apoptosis by interacting with CXCR4 surface receptors. This chain is Protein Nef, found in Homo sapiens (Human).